Reading from the N-terminus, the 179-residue chain is Coiled-coil domain-containing protein 32 (179 aa).

Positions 36–65 (DNAFSDSFMDSHPAGESHTAAADSAVQPAG) are disordered. Residues 75–98 (EVYLASLEKKLRRIKGLNEEVTSK) are a coiled coil. Positions 158-179 (LIPPESQAEKPEAGDKPAAAEQ) are disordered.

Interacts with AP2S1; the interaction is direct and mediates association with adaptor protein complex 2 (AP-2).

The protein localises to the membrane. The protein resides in the coated pit. Functionally, regulates clathrin-mediated endocytsois of cargos such as transferrin probably through the association and modulation of adaptor protein complex 2 (AP-2). Has a role in ciliogenesis. Required for proper cephalic and left/right axis development. This chain is Coiled-coil domain-containing protein 32 (Ccdc32), found in Mus musculus (Mouse).